Here is a 234-residue protein sequence, read N- to C-terminus: MTYKRVLLKLSGEALMGEKPYGIDPAIVQSIAEDVSKVVGNNIQLAIVVGGGNIFRGLKGSADGMDRATADYVGMLATVMNAISLQDGLERVGVATRVQTAIEMQEIAEPYIRRRAMRHLEKGRVVVFGGGCGNPFFTTDTTAALRAAEINAEVVMKATKVDGVYNCDPNKFQDAKKYTNLSYQQVLSDEIAVMDSTAIALCKDNNIPIMVFDIFKKGNISKAVAGEAIGSLIS.

Lys-9–Gly-12 lines the ATP pocket. Position 51 (Gly-51) interacts with UMP. Residues Gly-52 and Arg-56 each coordinate ATP. UMP-binding positions include Asp-71 and Cys-132–Thr-139. ATP-binding residues include Thr-159, Tyr-165, and Asp-168.

This sequence belongs to the UMP kinase family. In terms of assembly, homohexamer.

The protein resides in the cytoplasm. The catalysed reaction is UMP + ATP = UDP + ADP. The protein operates within pyrimidine metabolism; CTP biosynthesis via de novo pathway; UDP from UMP (UMPK route): step 1/1. With respect to regulation, inhibited by UTP. In terms of biological role, catalyzes the reversible phosphorylation of UMP to UDP. In Prochlorococcus marinus (strain MIT 9312), this protein is Uridylate kinase.